We begin with the raw amino-acid sequence, 340 residues long: Ferrochelatase (340 aa).

2 residues coordinate Fe cation: His189 and Glu292.

The protein belongs to the ferrochelatase family.

It is found in the cytoplasm. The catalysed reaction is heme b + 2 H(+) = protoporphyrin IX + Fe(2+). Its pathway is porphyrin-containing compound metabolism; protoheme biosynthesis; protoheme from protoporphyrin-IX: step 1/1. Functionally, catalyzes the ferrous insertion into protoporphyrin IX. The sequence is that of Ferrochelatase from Pseudomonas savastanoi pv. phaseolicola (strain 1448A / Race 6) (Pseudomonas syringae pv. phaseolicola (strain 1448A / Race 6)).